We begin with the raw amino-acid sequence, 787 residues long: Phenylalanine--tRNA ligase beta subunit (787 aa).

Residues 39 to 149 form the tRNA-binding domain; sequence APAFSGVVVA…EDAPVGTNIR (111 aa). One can recognise a B5 domain in the interval 400–475; the sequence is PEAKQVGLRL…RVYGYENIPD (76 aa). 4 residues coordinate Mg(2+): D453, D459, E462, and E463. The 93-residue stretch at 694–786 folds into the FDX-ACB domain; sequence SKFQPVRRDL…VATEAGARLR (93 aa).

It belongs to the phenylalanyl-tRNA synthetase beta subunit family. Type 1 subfamily. Tetramer of two alpha and two beta subunits. Mg(2+) is required as a cofactor.

It is found in the cytoplasm. It catalyses the reaction tRNA(Phe) + L-phenylalanine + ATP = L-phenylalanyl-tRNA(Phe) + AMP + diphosphate + H(+). The chain is Phenylalanine--tRNA ligase beta subunit from Neisseria gonorrhoeae (strain ATCC 700825 / FA 1090).